The following is a 378-amino-acid chain: Quinolinate synthase (378 aa).

Iminosuccinate is bound by residues His-59 and Ser-80. Residue Cys-125 participates in [4Fe-4S] cluster binding. Iminosuccinate contacts are provided by residues Tyr-151–Asn-153 and Ser-168. Cys-212 contributes to the [4Fe-4S] cluster binding site. Iminosuccinate is bound by residues His-238 to Glu-240 and Thr-255. Cys-309 contributes to the [4Fe-4S] cluster binding site.

This sequence belongs to the quinolinate synthase family. Type 1 subfamily. [4Fe-4S] cluster is required as a cofactor.

It localises to the cytoplasm. The catalysed reaction is iminosuccinate + dihydroxyacetone phosphate = quinolinate + phosphate + 2 H2O + H(+). It participates in cofactor biosynthesis; NAD(+) biosynthesis; quinolinate from iminoaspartate: step 1/1. Functionally, catalyzes the condensation of iminoaspartate with dihydroxyacetone phosphate to form quinolinate. This is Quinolinate synthase from Burkholderia pseudomallei (strain 1106a).